A 537-amino-acid polypeptide reads, in one-letter code: MPAITCVWSDGRSDTWPNVNGHSRTRSVPSLKPLPHQDSKNLLYRQICGRLLAQHVFGGAGSTQPILNQLCKRLSTGNPNNTNASTVVTAPEKNVVSARHVRPNPKSSKDTLEKQPKYSSQIYLTDSFENYYLASLPTNYQLYQRDSNRENGNGKREFWLYGHPSGRPFRSVNDFLHHLYWLISDLTRNESTCCCVLCSGNMTRVRKNLQKENERMFHECKDDTYTWPSSYRLGEVVWIDINNELIPAIIVARNLINYESNQMDAVKLISDTFVEPYQYHCKQLGNSRYYFDMAAADIEPWSRHPLDLQKQEHLVAHSICQTWNLFGIFQPLEGIDMEEPKFHDENYSIPLTVLPTFGGESNSLDDHFYGIFRGAEKLWINDLCVISTSSLPSVLQKTSFMYISDIYVNEDDIVCFQGSLWTQIDKNALDYNDSADNIDEHKDDLKELPRRLQMVSKLSNTYFRCLHDKSVEYVCPFADVLGRWYEPWFVKGDLNYTSEVKERTSSRLSAVGSENWVDDDFYEYLLSEIDMVSAVVM.

The disordered stretch occupies residues 96–116; sequence VSARHVRPNPKSSKDTLEKQP. Residues 107–116 are compositionally biased toward basic and acidic residues; it reads SSKDTLEKQP.

Interacts with clr3.

Its subcellular location is the nucleus. It is found in the chromosome. The protein resides in the centromere. The protein localises to the telomere. Required for deacetylation in the mating-type region and the centromere. Acts upstream of the histone deacetylases to promote transcriptional silencing. Required for proper positioning of nucleosomes at heterochromatic loci and for transcriptional gene silencing (TGS) function of the Snf2/Hdac-containing repressor complex (SHREC). The sequence is that of Cryptic loci regulator 2 (clr2) from Schizosaccharomyces pombe (strain 972 / ATCC 24843) (Fission yeast).